The primary structure comprises 202 residues: dITP/XTP pyrophosphatase (202 aa).

7–12 serves as a coordination point for substrate; the sequence is TTNEGK. 2 residues coordinate Mg(2+): Glu-37 and Asp-66. Asp-66 serves as the catalytic Proton acceptor. Substrate is bound by residues Ser-67, 155–158, Lys-178, and 183–184; these read FGYD and HR.

This sequence belongs to the HAM1 NTPase family. As to quaternary structure, homodimer. Mg(2+) serves as cofactor.

It carries out the reaction XTP + H2O = XMP + diphosphate + H(+). The catalysed reaction is dITP + H2O = dIMP + diphosphate + H(+). The enzyme catalyses ITP + H2O = IMP + diphosphate + H(+). Functionally, pyrophosphatase that catalyzes the hydrolysis of nucleoside triphosphates to their monophosphate derivatives, with a high preference for the non-canonical purine nucleotides XTP (xanthosine triphosphate), dITP (deoxyinosine triphosphate) and ITP. Seems to function as a house-cleaning enzyme that removes non-canonical purine nucleotides from the nucleotide pool, thus preventing their incorporation into DNA/RNA and avoiding chromosomal lesions. The protein is dITP/XTP pyrophosphatase of Aquifex aeolicus (strain VF5).